Here is a 174-residue protein sequence, read N- to C-terminus: Peptide methionine sulfoxide reductase MsrA (174 aa).

The active site involves Cys11.

The protein belongs to the MsrA Met sulfoxide reductase family.

It carries out the reaction L-methionyl-[protein] + [thioredoxin]-disulfide + H2O = L-methionyl-(S)-S-oxide-[protein] + [thioredoxin]-dithiol. It catalyses the reaction [thioredoxin]-disulfide + L-methionine + H2O = L-methionine (S)-S-oxide + [thioredoxin]-dithiol. Functionally, has an important function as a repair enzyme for proteins that have been inactivated by oxidation. Catalyzes the reversible oxidation-reduction of methionine sulfoxide in proteins to methionine. The protein is Peptide methionine sulfoxide reductase MsrA of Haloquadratum walsbyi (strain DSM 16790 / HBSQ001).